Here is a 172-residue protein sequence, read N- to C-terminus: C-phycocyanin subunit beta (172 aa).

An N4-methylasparagine modification is found at asparagine 72. 2 residues coordinate (2R,3E)-phycocyanobilin: cysteine 82 and cysteine 153.

It belongs to the phycobiliprotein family. As to quaternary structure, heterodimer of an alpha and a beta subunit, which further assembles into trimers and the trimers into hexamers. In terms of processing, contains two covalently linked bilin chromophores. The chromophore on position 82 is added by the phycocyanobilin lyase CpcUS, while the chromophore on position 153 is added by the phycocyanobilin lyase CpcT.

The protein localises to the cellular thylakoid membrane. Light-harvesting photosynthetic bile pigment-protein from the phycobiliprotein complex (phycobilisome, PBS). Phycocyanin is the major phycobiliprotein in the PBS rod. This chain is C-phycocyanin subunit beta (cpcB), found in Picosynechococcus sp. (strain ATCC 27264 / PCC 7002 / PR-6) (Agmenellum quadruplicatum).